We begin with the raw amino-acid sequence, 158 residues long: UPAR/Ly6 domain-containing protein crim (158 aa).

Positions 1–22 (MHYHTNLIAALLLAALIHEGSA) are cleaved as a signal peptide. The Extracellular segment spans residues 23-136 (IWCYRCTSAT…FCFLDHRCNG (114 aa)). N-linked (GlcNAc...) asparagine glycosylation occurs at Asn-107. A lipid anchor (GPI-anchor amidated asparagine) is attached at Asn-135. A propeptide spans 136–158 (GASGLQTSAVIGLLTLIPALLLR) (removed in mature form). A helical membrane pass occupies residues 137 to 157 (ASGLQTSAVIGLLTLIPALLL). Position 158 (Arg-158) is a topological domain, cytoplasmic.

Belongs to the quiver family.

The protein resides in the membrane. In terms of biological role, required for septate junction assembly possibly by organizing the preassembly and transport of septate junction proteins. Involved in epithelial cell septate junction-mediated paracellular barrier functions of trachea, hindgut and salivary gland. This Drosophila melanogaster (Fruit fly) protein is UPAR/Ly6 domain-containing protein crim.